We begin with the raw amino-acid sequence, 186 residues long: Elongation factor P (186 aa).

Belongs to the elongation factor P family.

The protein localises to the cytoplasm. Its pathway is protein biosynthesis; polypeptide chain elongation. In terms of biological role, involved in peptide bond synthesis. Stimulates efficient translation and peptide-bond synthesis on native or reconstituted 70S ribosomes in vitro. Probably functions indirectly by altering the affinity of the ribosome for aminoacyl-tRNA, thus increasing their reactivity as acceptors for peptidyl transferase. In Neisseria gonorrhoeae (strain ATCC 700825 / FA 1090), this protein is Elongation factor P.